Here is an 84-residue protein sequence, read N- to C-terminus: MTDIFANPDKTLDALGLRCPEPVMMVRKTVRHMEDGQTLLIIADDPATTRDIPGFCRFMDHQLLAQDTGQTPYRYLVKKGAKAE.

C19 acts as the Cysteine persulfide intermediate in catalysis.

This sequence belongs to the sulfur carrier protein TusA family. As to quaternary structure, interacts with IscS.

Its subcellular location is the cytoplasm. The protein operates within tRNA modification. Functionally, sulfur carrier protein involved in sulfur trafficking in the cell. Part of a sulfur-relay system required for 2-thiolation during synthesis of 2-thiouridine of the modified wobble base 5-methylaminomethyl-2-thiouridine (mnm(5)s(2)U) in tRNA. Interacts with IscS and stimulates its cysteine desulfurase activity. Accepts an activated sulfur from IscS, which is then transferred to TusD, and thus determines the direction of sulfur flow from IscS to 2-thiouridine formation. Also appears to be involved in sulfur transfer for the biosynthesis of molybdopterin. In Yersinia enterocolitica serotype O:8 / biotype 1B (strain NCTC 13174 / 8081), this protein is Sulfur carrier protein TusA.